The sequence spans 174 residues: Ribosome maturation factor RimM (174 aa).

Residues 98 to 171 (EGEFYFHQII…TIHIEVMEGL (74 aa)) form the PRC barrel domain.

It belongs to the RimM family. As to quaternary structure, binds ribosomal protein uS19.

It localises to the cytoplasm. Functionally, an accessory protein needed during the final step in the assembly of 30S ribosomal subunit, possibly for assembly of the head region. Essential for efficient processing of 16S rRNA. May be needed both before and after RbfA during the maturation of 16S rRNA. It has affinity for free ribosomal 30S subunits but not for 70S ribosomes. This is Ribosome maturation factor RimM from Bacillus pumilus (strain SAFR-032).